The following is an 85-amino-acid chain: N.vectensis toxin 6 (85 aa).

Residues 1–20 (MISFKTVIVCLFLWVVIIGA) form the signal peptide. 3 disulfide bridges follow: Cys-46–Cys-82, Cys-48–Cys-71, and Cys-64–Cys-83.

Functionally, probable toxin. The chain is N.vectensis toxin 6 from Nematostella vectensis (Starlet sea anemone).